We begin with the raw amino-acid sequence, 475 residues long: Sulfate adenylyltransferase subunit 1 (475 aa).

Residues 25 to 239 form the tr-type G domain; it reads KSLLRFLTCG…EVLETVEIQR (215 aa). Residues 34–41 are G1; it reads GSVDDGKS. 34–41 contacts GTP; sequence GSVDDGKS. Residues 92–96 form a G2 region; the sequence is GITID. The interval 113 to 116 is G3; the sequence is DTPG. GTP-binding positions include 113–117 and 168–171; these read DTPGH and NKMD. Positions 168-171 are G4; sequence NKMD. The interval 206 to 208 is G5; sequence SAL.

It belongs to the TRAFAC class translation factor GTPase superfamily. Classic translation factor GTPase family. CysN/NodQ subfamily. As to quaternary structure, heterodimer composed of CysD, the smaller subunit, and CysN.

The enzyme catalyses sulfate + ATP + H(+) = adenosine 5'-phosphosulfate + diphosphate. It functions in the pathway sulfur metabolism; hydrogen sulfide biosynthesis; sulfite from sulfate: step 1/3. Functionally, with CysD forms the ATP sulfurylase (ATPS) that catalyzes the adenylation of sulfate producing adenosine 5'-phosphosulfate (APS) and diphosphate, the first enzymatic step in sulfur assimilation pathway. APS synthesis involves the formation of a high-energy phosphoric-sulfuric acid anhydride bond driven by GTP hydrolysis by CysN coupled to ATP hydrolysis by CysD. The polypeptide is Sulfate adenylyltransferase subunit 1 (Shigella flexneri serotype 5b (strain 8401)).